The primary structure comprises 370 residues: Peptide chain release factor 2 (370 aa).

The residue at position 252 (Gln-252) is an N5-methylglutamine.

Belongs to the prokaryotic/mitochondrial release factor family. Post-translationally, methylated by PrmC. Methylation increases the termination efficiency of RF2.

The protein localises to the cytoplasm. Functionally, peptide chain release factor 2 directs the termination of translation in response to the peptide chain termination codons UGA and UAA. In Mycobacterium avium (strain 104), this protein is Peptide chain release factor 2.